A 270-amino-acid chain; its full sequence is ATP synthase subunit a (270 aa).

6 helical membrane passes run 27–47 (FWTF…VFIL), 90–110 (IAPL…MDLI), 147–166 (VNMT…FYSV), 182–202 (PFNT…SLIA), 211–231 (LFGN…TLGV), and 238–258 (FLWA…FMML).

This sequence belongs to the ATPase A chain family. As to quaternary structure, F-type ATPases have 2 components, CF(1) - the catalytic core - and CF(0) - the membrane proton channel. CF(1) has five subunits: alpha(3), beta(3), gamma(1), delta(1), epsilon(1). CF(0) has three main subunits: a(1), b(2) and c(9-12). The alpha and beta chains form an alternating ring which encloses part of the gamma chain. CF(1) is attached to CF(0) by a central stalk formed by the gamma and epsilon chains, while a peripheral stalk is formed by the delta and b chains.

The protein localises to the cell inner membrane. In terms of biological role, key component of the proton channel; it plays a direct role in the translocation of protons across the membrane. The sequence is that of ATP synthase subunit a from Pseudoalteromonas atlantica (strain T6c / ATCC BAA-1087).